The primary structure comprises 604 residues: Elongation factor 4 1 (604 aa).

The region spanning 10–191 (EHIRNFCIIA…AIVDSVPAPT (182 aa)) is the tr-type G domain. Residues 22–27 (DHGKST) and 138–141 (NKID) contribute to the GTP site.

Belongs to the TRAFAC class translation factor GTPase superfamily. Classic translation factor GTPase family. LepA subfamily.

Its subcellular location is the cell inner membrane. The enzyme catalyses GTP + H2O = GDP + phosphate + H(+). In terms of biological role, required for accurate and efficient protein synthesis under certain stress conditions. May act as a fidelity factor of the translation reaction, by catalyzing a one-codon backward translocation of tRNAs on improperly translocated ribosomes. Back-translocation proceeds from a post-translocation (POST) complex to a pre-translocation (PRE) complex, thus giving elongation factor G a second chance to translocate the tRNAs correctly. Binds to ribosomes in a GTP-dependent manner. This is Elongation factor 4 1 from Rhodopirellula baltica (strain DSM 10527 / NCIMB 13988 / SH1).